The chain runs to 352 residues: Molybdenum import ATP-binding protein ModC (352 aa).

The region spanning 1–229 (MLELNFSQTL…SVMNPWLPKE (229 aa)) is the ABC transporter domain. 31 to 38 (GVSGAGKT) provides a ligand contact to ATP. Positions 289–352 (QTSIRNVLRA…AQIKSVSITA (64 aa)) constitute a Mop domain.

Belongs to the ABC transporter superfamily. Molybdate importer (TC 3.A.1.8) family. As to quaternary structure, the complex is composed of two ATP-binding proteins (ModC), two transmembrane proteins (ModB) and a solute-binding protein (ModA).

The protein resides in the cell inner membrane. The catalysed reaction is molybdate(out) + ATP + H2O = molybdate(in) + ADP + phosphate + H(+). In terms of biological role, part of the ABC transporter complex ModABC involved in molybdenum import. Responsible for energy coupling to the transport system. The sequence is that of Molybdenum import ATP-binding protein ModC from Escherichia coli O6:H1 (strain CFT073 / ATCC 700928 / UPEC).